The sequence spans 358 residues: Chorismate synthase (358 aa).

The interval 39–61 (ADIQPFLDKRRPGQSRHTTQRQE) is disordered. Residues Arg-48 and Arg-54 each coordinate NADP(+). FMN contacts are provided by residues 125-127 (RSS), 237-238 (NA), Gly-284, 299-303 (KPTSS), and Arg-325.

The protein belongs to the chorismate synthase family. In terms of assembly, homotetramer. FMNH2 serves as cofactor.

The enzyme catalyses 5-O-(1-carboxyvinyl)-3-phosphoshikimate = chorismate + phosphate. It functions in the pathway metabolic intermediate biosynthesis; chorismate biosynthesis; chorismate from D-erythrose 4-phosphate and phosphoenolpyruvate: step 7/7. Its function is as follows. Catalyzes the anti-1,4-elimination of the C-3 phosphate and the C-6 proR hydrogen from 5-enolpyruvylshikimate-3-phosphate (EPSP) to yield chorismate, which is the branch point compound that serves as the starting substrate for the three terminal pathways of aromatic amino acid biosynthesis. This reaction introduces a second double bond into the aromatic ring system. The polypeptide is Chorismate synthase (Sphingopyxis alaskensis (strain DSM 13593 / LMG 18877 / RB2256) (Sphingomonas alaskensis)).